A 359-amino-acid polypeptide reads, in one-letter code: Phospho-N-acetylmuramoyl-pentapeptide-transferase (359 aa).

10 consecutive transmembrane segments (helical) span residues 3 to 23, 53 to 73, 84 to 104, 117 to 137, 156 to 176, 187 to 207, 231 to 251, 255 to 275, 283 to 303, and 330 to 350; these read QILF…PVLI, GGVA…LIGI, GLLV…DDFI, TAKL…ALQF, IATV…LVSA, LDGL…IITF, LALI…WNAA, IFMG…LSIT, VVIG…VAVF, and VIIR…ALFY.

It belongs to the glycosyltransferase 4 family. MraY subfamily. Mg(2+) is required as a cofactor.

Its subcellular location is the cell membrane. The catalysed reaction is UDP-N-acetyl-alpha-D-muramoyl-L-alanyl-gamma-D-glutamyl-meso-2,6-diaminopimeloyl-D-alanyl-D-alanine + di-trans,octa-cis-undecaprenyl phosphate = di-trans,octa-cis-undecaprenyl diphospho-N-acetyl-alpha-D-muramoyl-L-alanyl-D-glutamyl-meso-2,6-diaminopimeloyl-D-alanyl-D-alanine + UMP. It participates in cell wall biogenesis; peptidoglycan biosynthesis. Its function is as follows. Catalyzes the initial step of the lipid cycle reactions in the biosynthesis of the cell wall peptidoglycan: transfers peptidoglycan precursor phospho-MurNAc-pentapeptide from UDP-MurNAc-pentapeptide onto the lipid carrier undecaprenyl phosphate, yielding undecaprenyl-pyrophosphoryl-MurNAc-pentapeptide, known as lipid I. In Rhodococcus jostii (strain RHA1), this protein is Phospho-N-acetylmuramoyl-pentapeptide-transferase.